A 306-amino-acid polypeptide reads, in one-letter code: Ornithine carbamoyltransferase (306 aa).

Residues 51–54 (STRT), Gln-78, Arg-102, and 129–132 (HPVQ) contribute to the carbamoyl phosphate site. Residues Asn-157, Asp-221, and 225–226 (SM) each bind L-ornithine. Residues 261–262 (CL) and Arg-289 each bind carbamoyl phosphate.

Belongs to the aspartate/ornithine carbamoyltransferase superfamily. OTCase family.

Its subcellular location is the cytoplasm. It catalyses the reaction carbamoyl phosphate + L-ornithine = L-citrulline + phosphate + H(+). It functions in the pathway amino-acid biosynthesis; L-arginine biosynthesis; L-arginine from L-ornithine and carbamoyl phosphate: step 1/3. Reversibly catalyzes the transfer of the carbamoyl group from carbamoyl phosphate (CP) to the N(epsilon) atom of ornithine (ORN) to produce L-citrulline. In Campylobacter hominis (strain ATCC BAA-381 / DSM 21671 / CCUG 45161 / LMG 19568 / NCTC 13146 / CH001A), this protein is Ornithine carbamoyltransferase.